The sequence spans 629 residues: DNA-directed RNA polymerase subunit beta' (629 aa).

Zn(2+) is bound by residues C70, C72, C85, and C88. D472, D474, and D476 together coordinate Mg(2+).

Belongs to the RNA polymerase beta' chain family. RpoC1 subfamily. As to quaternary structure, in plastids the minimal PEP RNA polymerase catalytic core is composed of four subunits: alpha, beta, beta', and beta''. When a (nuclear-encoded) sigma factor is associated with the core the holoenzyme is formed, which can initiate transcription. The cofactor is Mg(2+). Requires Zn(2+) as cofactor.

It localises to the plastid. It is found in the chloroplast. The catalysed reaction is RNA(n) + a ribonucleoside 5'-triphosphate = RNA(n+1) + diphosphate. In terms of biological role, DNA-dependent RNA polymerase catalyzes the transcription of DNA into RNA using the four ribonucleoside triphosphates as substrates. This chain is DNA-directed RNA polymerase subunit beta', found in Pyropia yezoensis (Susabi-nori).